The sequence spans 81 residues: Sulfur carrier protein TusA (81 aa).

Catalysis depends on cysteine 19, which acts as the Cysteine persulfide intermediate.

This sequence belongs to the sulfur carrier protein TusA family.

Its subcellular location is the cytoplasm. Sulfur carrier protein which probably makes part of a sulfur-relay system. This is Sulfur carrier protein TusA from Shewanella baltica (strain OS223).